The following is a 466-amino-acid chain: Cysteine--tRNA ligase (466 aa).

Cys28 lines the Zn(2+) pocket. The 'HIGH' region motif lies at 30–40; sequence PTVYNYIHIGN. The Zn(2+) site is built by Cys208, His233, and Glu237. The 'KMSKS' region signature appears at 265 to 269; that stretch reads KMSKS. Residue Lys268 participates in ATP binding.

The protein belongs to the class-I aminoacyl-tRNA synthetase family. As to quaternary structure, monomer. It depends on Zn(2+) as a cofactor.

Its subcellular location is the cytoplasm. It catalyses the reaction tRNA(Cys) + L-cysteine + ATP = L-cysteinyl-tRNA(Cys) + AMP + diphosphate. This Staphylococcus aureus (strain bovine RF122 / ET3-1) protein is Cysteine--tRNA ligase.